The sequence spans 451 residues: Methionine aminopeptidase 2-2 (451 aa).

The disordered stretch occupies residues Met1–Pro97. Positions Thr19 to Pro28 are enriched in polar residues. Residues Glu35–Gly45 show a composition bias toward acidic residues. Positions Lys60–Ala73 are enriched in basic residues. Positions Gly74 to Ser83 are enriched in low complexity. A substrate-binding site is contributed by His204. Residues Asp224, Asp235, and His304 each contribute to the a divalent metal cation site. His312 contacts substrate. 2 residues coordinate a divalent metal cation: Glu337 and Glu432.

It belongs to the peptidase M24A family. Methionine aminopeptidase eukaryotic type 2 subfamily. Co(2+) is required as a cofactor. The cofactor is Zn(2+). Requires Mn(2+) as cofactor. Fe(2+) serves as cofactor.

It localises to the cytoplasm. It catalyses the reaction Release of N-terminal amino acids, preferentially methionine, from peptides and arylamides.. In terms of biological role, cotranslationally removes the N-terminal methionine from nascent proteins. The N-terminal methionine is often cleaved when the second residue in the primary sequence is small and uncharged (Met-Ala-, Cys, Gly, Pro, Ser, Thr, or Val). This is Methionine aminopeptidase 2-2 from Leptosphaeria maculans (strain JN3 / isolate v23.1.3 / race Av1-4-5-6-7-8) (Blackleg fungus).